The primary structure comprises 112 residues: T cell receptor alpha variable 17 (112 aa).

Positions 1-21 are cleaved as a signal peptide; the sequence is METLLGVSLVILWLQLARVNS. The Ig-like domain occupies 22-112; that stretch reads QQGEEDPQAL…DTASYFCATD (91 aa). Residues N38 and N42 are each glycosylated (N-linked (GlcNAc...) asparagine). A disulfide bridge links C43 with C109.

In terms of assembly, alpha-beta TR is a heterodimer composed of an alpha and beta chain; disulfide-linked. The alpha-beta TR is associated with the transmembrane signaling CD3 coreceptor proteins to form the TR-CD3 (TcR or TCR). The assembly of alpha-beta TR heterodimers with CD3 occurs in the endoplasmic reticulum where a single alpha-beta TR heterodimer associates with one CD3D-CD3E heterodimer, one CD3G-CD3E heterodimer and one CD247 homodimer forming a stable octameric structure. CD3D-CD3E and CD3G-CD3E heterodimers preferentially associate with TR alpha and TR beta chains, respectively. The association of the CD247 homodimer is the last step of TcR assembly in the endoplasmic reticulum and is required for transport to the cell surface.

Its subcellular location is the cell membrane. Functionally, v region of the variable domain of T cell receptor (TR) alpha chain that participates in the antigen recognition. Alpha-beta T cell receptors are antigen specific receptors which are essential to the immune response and are present on the cell surface of T lymphocytes. Recognize peptide-major histocompatibility (MH) (pMH) complexes that are displayed by antigen presenting cells (APC), a prerequisite for efficient T cell adaptive immunity against pathogens. Binding of alpha-beta TR to pMH complex initiates TR-CD3 clustering on the cell surface and intracellular activation of LCK that phosphorylates the ITAM motifs of CD3G, CD3D, CD3E and CD247 enabling the recruitment of ZAP70. In turn ZAP70 phosphorylates LAT, which recruits numerous signaling molecules to form the LAT signalosome. The LAT signalosome propagates signal branching to three major signaling pathways, the calcium, the mitogen-activated protein kinase (MAPK) kinase and the nuclear factor NF-kappa-B (NF-kB) pathways, leading to the mobilization of transcription factors that are critical for gene expression and essential for T cell growth and differentiation. The T cell repertoire is generated in the thymus, by V-(D)-J rearrangement. This repertoire is then shaped by intrathymic selection events to generate a peripheral T cell pool of self-MH restricted, non-autoaggressive T cells. Post-thymic interaction of alpha-beta TR with the pMH complexes shapes TR structural and functional avidity. This Homo sapiens (Human) protein is T cell receptor alpha variable 17.